The sequence spans 290 residues: Tegument protein VP22 (290 aa).

A compositionally biased stretch (polar residues) spans 98–112 (STSHGRLSPTKTTPH). The segment at 98-156 (STSHGRLSPTKTTPHPKSAGVTPPQRVPARPATRAAAPSATPTQPDCVAKQRTSPGVNS) is disordered. Low complexity predominate over residues 118 to 142 (VTPPQRVPARPATRAAAPSATPTQP). The short motif at 146 to 149 (AKQR) is the Nuclear localization signal element. Positions 219–231 (LDRFLKAAAIRIL) match the Nuclear export signal motif.

Belongs to the alphaherpesvirinae VP22 tegument protein family. As to quaternary structure, interacts with gE (via C-terminus); this interaction is necessary for the recruitment of VP22 to the Golgi and its packaging into virions. Interacts with gM (via C-terminus). Interacts with VP16; this interaction allows the formation of a tripartite complex composed of VP16, VP22 and UL41/VHS. Interacts with the capsid-binding protein UL16. Interacts with host CGAS. Highly phosphorylated in the host cell. Packaging is selective for underphosphorylated forms.

The protein localises to the virion tegument. It localises to the host cytoplasm. The protein resides in the host nucleus. It is found in the host Golgi apparatus. Functionally, tegument protein that plays different roles during the time course of infection. Participates in both the accumulation of viral mRNAs and viral protein translation at late time of infection. Modulates the RNase activity of the virion host shutoff protein UL41 probably to ensure necessary levels of key cellular mRNAs and proteins. Plays a role in microtubule reorganization that occurs after viral infection by stabilizing microtubule network. Plays a role in the inhibition of host innate immune system by targeting the CGAS enzymatic activity which is the principal cytosolic DNA sensor that detects invading viral DNA. Acts by mediating disruption of liquid-like droplets in which CGAS is activated, thereby preventing CGAS activity. The sequence is that of Tegument protein VP22 (11) from Equus caballus (Horse).